The primary structure comprises 72 residues: UPF0352 protein swp_2271 (72 aa).

This sequence belongs to the UPF0352 family.

The sequence is that of UPF0352 protein swp_2271 from Shewanella piezotolerans (strain WP3 / JCM 13877).